The chain runs to 271 residues: MARINRISITLCALLFTTLPLTPMAHASKQARESSATTHITKKADKKKSTATTKKTQKTAKKAASKSTTKSKTASSVKKSSITASKNAKTRSKHAVNKTASASFTEKCTKRKGYKSHCVKVKNAASGTLADAHKAKVQKATKVAMNKLMQQIGKPYRWGGSSPRTGFDCSGLVYYAYKDLVKIRIPRTANEMYHLRDAAPIERSELKNGDLVFFRTQGRGTADHVGVYVGNGKFIQSPRTGQEIQITSLSEDYWQRHYVGARRVMTPKTLR.

The first 27 residues, 1–27 (MARINRISITLCALLFTTLPLTPMAHA), serve as a signal peptide directing secretion. Residues 27–102 (ASKQARESSA…KHAVNKTASA (76 aa)) form a disordered region. A compositionally biased stretch (basic residues) spans 55–64 (KTQKTAKKAA). Over residues 65 to 86 (SKSTTKSKTASSVKKSSITASK) the composition is skewed to low complexity. A NlpC/P60 domain is found at 138–265 (QKATKVAMNK…RHYVGARRVM (128 aa)). The active-site Nucleophile is the Cys-169. Residue His-224 is the Proton acceptor of the active site. The active site involves Gln-236.

It belongs to the peptidase C40 family.

It participates in cell wall biogenesis; cell wall polysaccharide biosynthesis. A murein DD-endopeptidase with specificity for D-Ala-meso-diaminopimelic acid (mDAP) cross-links. Its role is probably to cleave D-Ala-mDAP cross-links to allow insertion of new glycans and thus cell wall expansion. Functionally redundant with MepM and MepH. Partially suppresses an mepS disruption mutant. This chain is Murein DD-endopeptidase MepH (mepH), found in Escherichia coli (strain K12).